The chain runs to 453 residues: MKFSTVILAAGKGTRMHSNMPKVLHTLAGKPMVKHVIDTCNNLGAQNIHLVYGHGGDQMQQALVNESVNWVLQAQQLGTGHAVDQASPHFQDDEKILVLYGDVPLISEDTIESLLEAQPTDGIALLTVVLEDPTGYGRIVRKRGPVVAIVEQKDASEEQKLIKEVNTGVLVATGRDLKRWLAGLNNNNAQGEYYLTDVIAAAHDEGRAVEAVHPSHSIEVEGVNDRIQLARLERAFQARQAKKLLEQGVMLRDPARFDLRGTLQCGSDVEIDVNVIIEGNVSIGNNVVIGAGSILKDCEIDDNTVIRPYSVIEGATVGENCTVGPFTRLRPGAELRDDAHVGNFVEMKNARLGEGSKANHLTYLGDAEIGKGVNVGAGVITCNYDGANKHKTVIGDDVFVGSDCQLVAPVTIGNGATIGAGTTLTKNVAEGELVITRAPERKIAGWQRPAKKK.

A pyrophosphorylase region spans residues methionine 1–arginine 226. UDP-N-acetyl-alpha-D-glucosamine-binding positions include leucine 8–glycine 11, lysine 22, glutamine 73, glycine 78–threonine 79, tyrosine 100–aspartate 102, glycine 137, glutamate 151, asparagine 166, and asparagine 224. Residue aspartate 102 coordinates Mg(2+). A Mg(2+)-binding site is contributed by asparagine 224. The tract at residues isoleucine 227–glutamine 247 is linker. Residues glycine 248–lysine 453 form an N-acetyltransferase region. Positions 330 and 348 each coordinate UDP-N-acetyl-alpha-D-glucosamine. Residue histidine 360 is the Proton acceptor of the active site. Residues tyrosine 363 and asparagine 374 each coordinate UDP-N-acetyl-alpha-D-glucosamine. Acetyl-CoA contacts are provided by residues alanine 377, asparagine 383 to tyrosine 384, serine 402, alanine 420, and arginine 437.

It in the N-terminal section; belongs to the N-acetylglucosamine-1-phosphate uridyltransferase family. This sequence in the C-terminal section; belongs to the transferase hexapeptide repeat family. As to quaternary structure, homotrimer. Mg(2+) is required as a cofactor.

The protein localises to the cytoplasm. The enzyme catalyses alpha-D-glucosamine 1-phosphate + acetyl-CoA = N-acetyl-alpha-D-glucosamine 1-phosphate + CoA + H(+). It carries out the reaction N-acetyl-alpha-D-glucosamine 1-phosphate + UTP + H(+) = UDP-N-acetyl-alpha-D-glucosamine + diphosphate. It functions in the pathway nucleotide-sugar biosynthesis; UDP-N-acetyl-alpha-D-glucosamine biosynthesis; N-acetyl-alpha-D-glucosamine 1-phosphate from alpha-D-glucosamine 6-phosphate (route II): step 2/2. It participates in nucleotide-sugar biosynthesis; UDP-N-acetyl-alpha-D-glucosamine biosynthesis; UDP-N-acetyl-alpha-D-glucosamine from N-acetyl-alpha-D-glucosamine 1-phosphate: step 1/1. Its pathway is bacterial outer membrane biogenesis; LPS lipid A biosynthesis. Functionally, catalyzes the last two sequential reactions in the de novo biosynthetic pathway for UDP-N-acetylglucosamine (UDP-GlcNAc). The C-terminal domain catalyzes the transfer of acetyl group from acetyl coenzyme A to glucosamine-1-phosphate (GlcN-1-P) to produce N-acetylglucosamine-1-phosphate (GlcNAc-1-P), which is converted into UDP-GlcNAc by the transfer of uridine 5-monophosphate (from uridine 5-triphosphate), a reaction catalyzed by the N-terminal domain. In Vibrio cholerae serotype O1 (strain ATCC 39541 / Classical Ogawa 395 / O395), this protein is Bifunctional protein GlmU.